The primary structure comprises 278 residues: MTVLHSVDFFPSGKAPVAIEPRLPQSAFPEHHHDFHEIVIVEHGTGIHVFNGQPYTISGGTVCFVRDHDRHLYEHTDNLCLTNVLYRSPDAFQFLAGLNQLLPQEQDGQYPSHWRVNQSALQQVRQLVAQMENAGDEMDTPAVANREILFMQLLVLLRKSSLMEGAANNDARLNQLLAWLEDHFAEEVCWESIADKFSLSLRTLHRQLKQQTGLTPQRYLNRLRLIKARHLLRHSDESVTDIAYRCGFGDSNHFSTLFRREFDWSPRDIRQGRDALLQ.

An HTH araC/xylS-type domain is found at 174-272 (NQLLAWLEDH…DWSPRDIRQG (99 aa)). 2 consecutive DNA-binding regions (H-T-H motif) follow at residues 191–212 (ESIADKFSLSLRTLHRQLKQQT) and 239–262 (VTDIAYRCGFGDSNHFSTLFRREF).

As to quaternary structure, binds DNA as a dimer.

The protein resides in the cytoplasm. In terms of biological role, activates expression of the rhaBAD and rhaT operons. This is HTH-type transcriptional activator RhaS from Citrobacter koseri (strain ATCC BAA-895 / CDC 4225-83 / SGSC4696).